A 225-amino-acid chain; its full sequence is Adenosylcobinamide-GDP ribazoletransferase (225 aa).

A run of 5 helical transmembrane segments spans residues 34–54, 93–113, 116–136, 165–185, and 204–224; these read FVGI…FWFL, NLGT…FYSF, VSAF…LLLL, PLLL…AITI, and VVGA…YFLA.

The protein belongs to the CobS family. Mg(2+) is required as a cofactor.

Its subcellular location is the cell membrane. The enzyme catalyses alpha-ribazole + adenosylcob(III)inamide-GDP = adenosylcob(III)alamin + GMP + H(+). It catalyses the reaction alpha-ribazole 5'-phosphate + adenosylcob(III)inamide-GDP = adenosylcob(III)alamin 5'-phosphate + GMP + H(+). The protein operates within cofactor biosynthesis; adenosylcobalamin biosynthesis; adenosylcobalamin from cob(II)yrinate a,c-diamide: step 7/7. Joins adenosylcobinamide-GDP and alpha-ribazole to generate adenosylcobalamin (Ado-cobalamin). Also synthesizes adenosylcobalamin 5'-phosphate from adenosylcobinamide-GDP and alpha-ribazole 5'-phosphate. In Archaeoglobus fulgidus (strain ATCC 49558 / DSM 4304 / JCM 9628 / NBRC 100126 / VC-16), this protein is Adenosylcobinamide-GDP ribazoletransferase (cobS1).